The sequence spans 456 residues: Bifunctional protein GlmU (456 aa).

Residues 1–229 (MLNSAMSVVI…LSEVEGVNNR (229 aa)) form a pyrophosphorylase region. Residues 11-14 (LAAG), Lys25, Gln76, 81-82 (GT), 103-105 (YGD), Gly140, Glu154, Asn169, and Asn227 each bind UDP-N-acetyl-alpha-D-glucosamine. Asp105 contributes to the Mg(2+) binding site. Asn227 serves as a coordination point for Mg(2+). The interval 230–250 (LQLSALERIYQREQADKLLLA) is linker. The interval 251–456 (GVMLLDPARF…SGWQRPVKKK (206 aa)) is N-acetyltransferase. Residues Arg333 and Lys351 each contribute to the UDP-N-acetyl-alpha-D-glucosamine site. The active-site Proton acceptor is His363. UDP-N-acetyl-alpha-D-glucosamine-binding residues include Tyr366 and Asn377. Residues Ala380, 386–387 (NY), Ser405, Ala423, and Arg440 each bind acetyl-CoA.

The protein in the N-terminal section; belongs to the N-acetylglucosamine-1-phosphate uridyltransferase family. It in the C-terminal section; belongs to the transferase hexapeptide repeat family. Homotrimer. The cofactor is Mg(2+).

It is found in the cytoplasm. It carries out the reaction alpha-D-glucosamine 1-phosphate + acetyl-CoA = N-acetyl-alpha-D-glucosamine 1-phosphate + CoA + H(+). It catalyses the reaction N-acetyl-alpha-D-glucosamine 1-phosphate + UTP + H(+) = UDP-N-acetyl-alpha-D-glucosamine + diphosphate. The protein operates within nucleotide-sugar biosynthesis; UDP-N-acetyl-alpha-D-glucosamine biosynthesis; N-acetyl-alpha-D-glucosamine 1-phosphate from alpha-D-glucosamine 6-phosphate (route II): step 2/2. Its pathway is nucleotide-sugar biosynthesis; UDP-N-acetyl-alpha-D-glucosamine biosynthesis; UDP-N-acetyl-alpha-D-glucosamine from N-acetyl-alpha-D-glucosamine 1-phosphate: step 1/1. It participates in bacterial outer membrane biogenesis; LPS lipid A biosynthesis. In terms of biological role, catalyzes the last two sequential reactions in the de novo biosynthetic pathway for UDP-N-acetylglucosamine (UDP-GlcNAc). The C-terminal domain catalyzes the transfer of acetyl group from acetyl coenzyme A to glucosamine-1-phosphate (GlcN-1-P) to produce N-acetylglucosamine-1-phosphate (GlcNAc-1-P), which is converted into UDP-GlcNAc by the transfer of uridine 5-monophosphate (from uridine 5-triphosphate), a reaction catalyzed by the N-terminal domain. This is Bifunctional protein GlmU from Pectobacterium atrosepticum (strain SCRI 1043 / ATCC BAA-672) (Erwinia carotovora subsp. atroseptica).